We begin with the raw amino-acid sequence, 2670 residues long: Inositol 1,4,5-trisphosphate-gated calcium channel ITPR3 (2670 aa).

Over 1-2233 (MNEMSSFLHI…YVEGASTGVL (2233 aa)) the chain is Cytoplasmic. 5 consecutive MIR domains span residues 113–173 (GDVV…LRSN), 174–224 (GDNV…INLF), 232–288 (EEVL…VEVV), 295–372 (GGAG…LDPT), and 378–434 (DSFV…IVSV). Positions 266, 269, and 270 each coordinate 1D-myo-inositol 1,4,5-trisphosphate. 1D-myo-inositol 1,4,5-trisphosphate-binding residues include Arg-503, Lys-507, Arg-510, Tyr-567, Arg-568, and Lys-569. Position 743 (Arg-743) interacts with Ca(2+). Phosphoserine is present on residues Ser-916 and Ser-934. Ca(2+) contacts are provided by Glu-1122 and Glu-1125. Basic and acidic residues predominate over residues 1138-1153 (EVEAGATKDKKERPSD). 2 disordered regions span residues 1138–1164 (EVEAGATKDKKERPSDEEGFLQPHGEK) and 1807–1835 (NMSDLGSQPREDREPADPATKGRVSSFSM). Phosphoserine occurs at positions 1813, 1832, and 1834. Residues Glu-1881 and Glu-1945 each coordinate Ca(2+). 3 residues coordinate ATP: Ala-1995, Glu-2148, and Lys-2151. The chain crosses the membrane as a helical span at residues 2234 to 2254 (GSPLISLLFWILICFSIAALF). At 2255-2262 (TKRYSVRP) the chain is on the extracellular side. The chain crosses the membrane as a helical span at residues 2263 to 2283 (LIVALILRSIYYLGIGPTLNI). Over 2284-2292 (LGALNLTNK) the chain is Cytoplasmic. The helical transmembrane segment at 2293 to 2310 (IVFVVSFVGNRGTFIRGY) threads the bilayer. Residues 2311 to 2324 (KAMVMDMEFLYHVG) lie on the Extracellular side of the membrane. Residues 2325-2345 (YILTSVLGLFAHELFYSILLF) traverse the membrane as a helical segment. Over 2346–2367 (DLIYREETLFNVIKSVTRNGRS) the chain is Cytoplasmic. The helical transmembrane segment at 2368–2388 (ILLTALLALILVYLFSIVGFL) threads the bilayer. Over 2389–2495 (FLKDDFILEV…ESLFPARVVY (107 aa)) the chain is Extracellular. A disulfide bond links Cys-2454 and Cys-2460. A helical membrane pass occupies residues 2496–2516 (DLLFFFIVIIIVLNLIFGVII). The Cytoplasmic segment spans residues 2517-2670 (DTFADLRSEK…FVDVQNCMSR (154 aa)). Cys-2537 and Phe-2538 together coordinate ATP. Cys-2537 provides a ligand contact to Zn(2+). 2 residues coordinate Zn(2+): Cys-2540 and His-2557. 4 residues coordinate ATP: Lys-2559, His-2562, Asn-2563, and Met-2564. His-2562 lines the Zn(2+) pocket. Thr-2580 provides a ligand contact to Ca(2+). 2 positions are modified to phosphoserine: Ser-2608 and Ser-2669.

It belongs to the InsP3 receptor family. In terms of assembly, homodimer. Homotetramer. Interacts with TRPC1, TRPC3, TRPC4. Interacts with TRPV4. Interacts with SIGMAR1. Found in a complex with AKT1 and PML; this interaction modulates IP3R3-phosphorylation and in turn ITPR3-dependent calcium release. Interacts with IRAG2 (via coiled-coil domain). Interacts with CABP1. Interacts with TMBIM4/LFG4. Interacts with CEMIP. Interacts with TESPA1. Interacts with TMEM203. Interacts with BOK; regulates ITPR3 expression. Interacts with BCL2L10. Interacts with CHGA and CHGB. Phosphorylated by AKT1 on serine and/or threonine residues.

Its subcellular location is the endoplasmic reticulum membrane. The protein resides in the cytoplasmic vesicle. The protein localises to the secretory vesicle membrane. The enzyme catalyses Ca(2+)(in) = Ca(2+)(out). With respect to regulation, inositol 1,4,5-trisphosphate-gated calcium channel is regulated by cytosolic calcium in a biphasic manner. At low concentrations, cytosolic calcium binds at a high-affinity juxtamembrane domain (JD) calcium binding site, allowing ITPR3 to activate by escaping a low-energy resting state through an ensemble of preactivated states. At high cytosolic calcium concentrations, ITPR3 preferentially enters an inhibited state stabilized by calcium binding at a second, low-affinity cytoplasmic domain (CD) calcium binding site. Inositol 1,4,5-trisphosphate-gated calcium channel that, upon 1D-myo-inositol 1,4,5-trisphosphate binding, transports calcium from the endoplasmic reticulum lumen to cytoplasm, thus releasing the intracellular calcium and therefore participates in cellular calcium ion homeostasis. 1D-myo-inositol 1,4,5-trisphosphate binds to the ligand-free channel without altering its global conformation, yielding the low-energy resting state, then progresses through resting-to preactivated transitions to the higher energy preactivated state, which increases affinity for calcium, promoting binding of the low basal cytosolic calcium at the juxtamembrane domain (JD) site, favoring the transition through the ensemble of high-energy intermediate states along the trajectory to the fully-open activated state. Upon opening, releases calcium in the cytosol where it can bind to the low-affinity cytoplasmic domain (CD) site and stabilizes the inhibited state to terminate calcium release. The protein is Inositol 1,4,5-trisphosphate-gated calcium channel ITPR3 of Mus musculus (Mouse).